A 226-amino-acid chain; its full sequence is Holliday junction branch migration complex subunit RuvA (226 aa).

The interval 1–67 (MITSVYAKIE…AINKELYAFK (67 aa)) is domain I. Residues 68-145 (SLKEKEWFKA…YLKNQIVVSD (78 aa)) are domain II. Residues 146-167 (KVEPQIDDDEKIDDSKDLNDDE) form a flexible linker region. Residues 168 to 226 (LLSEIVIEAIDCLISLGYKQEQIKTALAEIDLKNESINDSADLVAVIIKQIGLRTSEVS) form a domain III region.

It belongs to the RuvA family. In terms of assembly, homotetramer. Forms an RuvA(8)-RuvB(12)-Holliday junction (HJ) complex. HJ DNA is sandwiched between 2 RuvA tetramers; dsDNA enters through RuvA and exits via RuvB. An RuvB hexamer assembles on each DNA strand where it exits the tetramer. Each RuvB hexamer is contacted by two RuvA subunits (via domain III) on 2 adjacent RuvB subunits; this complex drives branch migration. In the full resolvosome a probable DNA-RuvA(4)-RuvB(12)-RuvC(2) complex forms which resolves the HJ.

The protein localises to the cytoplasm. In terms of biological role, the RuvA-RuvB-RuvC complex processes Holliday junction (HJ) DNA during genetic recombination and DNA repair, while the RuvA-RuvB complex plays an important role in the rescue of blocked DNA replication forks via replication fork reversal (RFR). RuvA specifically binds to HJ cruciform DNA, conferring on it an open structure. The RuvB hexamer acts as an ATP-dependent pump, pulling dsDNA into and through the RuvAB complex. HJ branch migration allows RuvC to scan DNA until it finds its consensus sequence, where it cleaves and resolves the cruciform DNA. In Mycoplasmoides gallisepticum (strain R(low / passage 15 / clone 2)) (Mycoplasma gallisepticum), this protein is Holliday junction branch migration complex subunit RuvA.